Here is a 316-residue protein sequence, read N- to C-terminus: Thioredoxin reductase (316 aa).

Residue 36–43 participates in FAD binding; the sequence is ERGIPGGQ. A disulfide bond links Cys-135 and Cys-138. 278-287 lines the FAD pocket; sequence DIREKSLRQI.

It belongs to the class-II pyridine nucleotide-disulfide oxidoreductase family. Homodimer. FAD is required as a cofactor.

The protein localises to the cytoplasm. It catalyses the reaction [thioredoxin]-dithiol + NADP(+) = [thioredoxin]-disulfide + NADPH + H(+). The chain is Thioredoxin reductase (trxB) from Bacillus subtilis (strain 168).